We begin with the raw amino-acid sequence, 129 residues long: Small ribosomal subunit protein uS11 (129 aa).

The protein belongs to the universal ribosomal protein uS11 family. As to quaternary structure, part of the 30S ribosomal subunit. Interacts with proteins S7 and S18. Binds to IF-3.

In terms of biological role, located on the platform of the 30S subunit, it bridges several disparate RNA helices of the 16S rRNA. Forms part of the Shine-Dalgarno cleft in the 70S ribosome. This is Small ribosomal subunit protein uS11 from Lacticaseibacillus casei (strain BL23) (Lactobacillus casei).